We begin with the raw amino-acid sequence, 102 residues long: Small ribosomal subunit protein eS24 (102 aa).

It belongs to the eukaryotic ribosomal protein eS24 family.

This is Small ribosomal subunit protein eS24 from Methanococcus maripaludis (strain C7 / ATCC BAA-1331).